Reading from the N-terminus, the 297-residue chain is Protein AKTIP homolog (297 aa).

Residues Phe13–Glu75 are disordered. Positions Leu17–Ser42 are enriched in basic and acidic residues. The span at Met59–Glu75 shows a compositional bias: polar residues. The region spanning Phe84–Asn232 is the UBC core domain.

Belongs to the ubiquitin-conjugating enzyme family. FTS subfamily.

The sequence is that of Protein AKTIP homolog from Nematostella vectensis (Starlet sea anemone).